Here is a 200-residue protein sequence, read N- to C-terminus: 3-isopropylmalate dehydratase small subunit (200 aa).

This sequence belongs to the LeuD family. LeuD type 1 subfamily. In terms of assembly, heterodimer of LeuC and LeuD.

The catalysed reaction is (2R,3S)-3-isopropylmalate = (2S)-2-isopropylmalate. Its pathway is amino-acid biosynthesis; L-leucine biosynthesis; L-leucine from 3-methyl-2-oxobutanoate: step 2/4. In terms of biological role, catalyzes the isomerization between 2-isopropylmalate and 3-isopropylmalate, via the formation of 2-isopropylmaleate. The chain is 3-isopropylmalate dehydratase small subunit from Pectobacterium carotovorum subsp. carotovorum (strain PC1).